The primary structure comprises 339 residues: Malate/(S)-sulfolactate dehydrogenase (339 aa).

This sequence belongs to the LDH2/MDH2 oxidoreductase family. Homodimer.

Its subcellular location is the cytoplasm. The catalysed reaction is (S)-malate + NAD(+) = oxaloacetate + NADH + H(+). It carries out the reaction (S)-malate + NADP(+) = oxaloacetate + NADPH + H(+). It catalyses the reaction (2S)-3-sulfolactate + NAD(+) = 3-sulfopyruvate + NADH + H(+). In terms of biological role, acts on oxaloacetate, sulfopyruvate but not on pyruvate. Has a higher selectivity for the coenzyme NADH than for NADPH. The protein is Malate/(S)-sulfolactate dehydrogenase (mdh) of Methanothermus fervidus (strain ATCC 43054 / DSM 2088 / JCM 10308 / V24 S).